The primary structure comprises 488 residues: UDP-N-acetylmuramate--L-alanine ligase (488 aa).

127–133 (GTHGKTT) provides a ligand contact to ATP.

The protein belongs to the MurCDEF family.

The protein resides in the cytoplasm. The catalysed reaction is UDP-N-acetyl-alpha-D-muramate + L-alanine + ATP = UDP-N-acetyl-alpha-D-muramoyl-L-alanine + ADP + phosphate + H(+). The protein operates within cell wall biogenesis; peptidoglycan biosynthesis. Its function is as follows. Cell wall formation. In Shewanella oneidensis (strain ATCC 700550 / JCM 31522 / CIP 106686 / LMG 19005 / NCIMB 14063 / MR-1), this protein is UDP-N-acetylmuramate--L-alanine ligase.